We begin with the raw amino-acid sequence, 317 residues long: Small ribosomal subunit protein uS2 (317 aa).

Serine 2 is modified (N-acetylserine). Laminin-binding stretches follow at residues 161 to 180 (IPCN…MLSR) and 205 to 229 (RDPE…EFQG). [DE]-W-[ST] repeat units follow at residues 230–232 (EWT) and 245–247 (DWS). Residues 242–317 (EVADWSEGVA…EWGGASADWS (76 aa)) form a laminin-binding region. Over residues 271 to 284 (EAAAPSKAPAAAEG) the composition is skewed to low complexity. Residues 271-317 (EAAAPSKAPAAAEGFAEDWSAQPATEDWSAAPTAQATEWGGASADWS) form a disordered region. [DE]-W-[ST] repeat units lie at residues 288 to 290 (DWS), 297 to 299 (DWS), and 315 to 317 (DWS).

The protein belongs to the universal ribosomal protein uS2 family. Monomer (37LRP) and homodimer (67LR). Component of the small ribosomal subunit. Mature ribosomes consist of a small (40S) and a large (60S) subunit. The 40S subunit contains about 33 different proteins and 1 molecule of RNA (18S). The 60S subunit contains about 49 different proteins and 3 molecules of RNA (28S, 5.8S and 5S). Interacts with rps21. Interacts with several laminins including at least lamb1. Interacts with mdk. Post-translationally, acylated. Acylation may be a prerequisite for conversion of the monomeric 37 kDa laminin receptor precursor (37LRP) to the mature dimeric 67 kDa laminin receptor (67LR), and may provide a mechanism for membrane association. Cleaved by stromelysin-3 (ST3) at the cell surface. Cleavage by stromelysin-3 may be a mechanism to alter cell-extracellular matrix interactions.

It is found in the cell membrane. The protein resides in the cytoplasm. It localises to the nucleus. Its function is as follows. Required for the assembly and/or stability of the 40S ribosomal subunit. Required for the processing of the 20S rRNA-precursor to mature 18S rRNA in a late step of the maturation of 40S ribosomal subunits. Also functions as a cell surface receptor for laminin. Plays a role in cell adhesion to the basement membrane and in the consequent activation of signaling transduction pathways. May play a role in cell fate determination and tissue morphogenesis. This is Small ribosomal subunit protein uS2 (rpsa) from Salmo salar (Atlantic salmon).